We begin with the raw amino-acid sequence, 175 residues long: Bifunctional protein PyrR (175 aa).

The short motif at 97-109 (IVLIDDVLFTGRT) is the PRPP-binding element.

Belongs to the purine/pyrimidine phosphoribosyltransferase family. PyrR subfamily. In terms of assembly, homodimer and homohexamer; in equilibrium.

The enzyme catalyses UMP + diphosphate = 5-phospho-alpha-D-ribose 1-diphosphate + uracil. Regulates transcriptional attenuation of the pyrimidine nucleotide (pyr) operon by binding in a uridine-dependent manner to specific sites on pyr mRNA. This disrupts an antiterminator hairpin in the RNA and favors formation of a downstream transcription terminator, leading to a reduced expression of downstream genes. Functionally, also displays a weak uracil phosphoribosyltransferase activity which is not physiologically significant. This is Bifunctional protein PyrR from Leuconostoc citreum (strain KM20).